We begin with the raw amino-acid sequence, 72 residues long: MAMNTVFLHLSEEAIKRLNKLRGWRKVSRSAILREAVEQYLERQQFPVRKAKGGRQRDEAVGVEELCKQHKE.

The segment at 52 to 72 is disordered; it reads KGGRQRDEAVGVEELCKQHKE. Basic and acidic residues predominate over residues 55–72; that stretch reads RQRDEAVGVEELCKQHKE.

Belongs to the YiiE family.

This is an uncharacterized protein from Escherichia coli O6:H1 (strain CFT073 / ATCC 700928 / UPEC).